We begin with the raw amino-acid sequence, 117 residues long: Antitoxin RelB3 (117 aa).

Its function is as follows. Antitoxin component of a type II toxin-antitoxin (TA) system. Neutralizes the effect of cognate toxin RelE3, but no other RelE or ParE toxin. In Caulobacter vibrioides (strain ATCC 19089 / CIP 103742 / CB 15) (Caulobacter crescentus), this protein is Antitoxin RelB3 (relB3).